Here is a 2513-residue protein sequence, read N- to C-terminus: Polyprotein P1234 (2513 aa).

The 232-residue stretch at 28 to 259 (EPKQVTPNDH…ESRKLLQSWH (232 aa)) folds into the Alphavirus-like MT domain. A nsP1 membrane-binding region spans residues 244 to 263 (GSTLYPESRKLLQSWHLPSV). S-palmitoyl cysteine; by host attachment occurs at residues Cys-417 and Cys-419. Residues 690-842 (DLTSPPYHEF…HNICTQVYHK (153 aa)) form the (+)RNA virus helicase ATP-binding domain. An a ribonucleoside 5'-triphosphate-binding site is contributed by 721–728 (GVPGSGKS). The 149-residue stretch at 843–991 (SISRRCTLPV…IKEWEAEHAS (149 aa)) folds into the (+)RNA virus helicase C-terminal domain. One can recognise a Peptidase C9 domain in the interval 1004-1327 (DTFQNKANVC…NQLNAVYAGL (324 aa)). The interval 1005–1024 (TFQNKANVCWAKCLVPILDT) is nucleolus localization signal. Residue Cys-1013 is the For cysteine protease nsP2 activity of the active site. Positions 1058 to 1067 (TRIYGVDLDS) match the Nuclear export signal motif. His-1083 (for cysteine protease nsP2 activity) is an active-site residue. The Nuclear localization signal motif lies at 1182–1186 (PTKRV). Residues Asp-1343, Asn-1357, Gly-1365, Gly-1445, Val-1446, and Tyr-1447 each coordinate ADP-D-ribose. Zn(2+) is bound by residues Cys-1595, Cys-1597, Cys-1620, and Cys-1638. Short sequence motifs (FGDF; binding to host G3BP1) lie at residues 1851–1854 (FGDF) and 1869–1872 (FGDF). One can recognise a RdRp catalytic domain in the interval 2267–2382 (DAVLETDIAS…HGVVSDALMA (116 aa)).

As to quaternary structure, interacts with non-structural protein 3. Interacts with RNA-directed RNA polymerase nsP4. Interacts with protease nsP2. interacts with itself. Interacts with mRNA-capping enzyme nsP1. Interacts with host DDX1. Interacts with host DDX3. Interacts (via C-terminus) with host G3BP1; this interaction inhibits the formation of host stress granules on viral mRNAs and the nsp3-G3BP1 complexes bind viral RNAs and probably orchestrate the assembly of viral replication complexes. Interacts (via C-terminus) with host G3BP2; this interaction inhibits the formation of host stress granules on viral mRNAs and the nsp3-G3BP2 complexes bind viral RNAs and probably orchestrate the assembly of viral replication complexes. In terms of assembly, interacts with mRNA-capping enzyme nsP1. Interacts with protease nsP2. interacts with itself. As to quaternary structure, interacts with RNA-directed RNA polymerase nsP4. Interacts with mRNA-capping enzyme nsP1. Interacts with KPNA1/karyopherin-alpha1; this interaction probably allows the active transport of protease nsP2 into the host nucleus. Mg(2+) is required as a cofactor. Mn(2+) serves as cofactor. Specific enzymatic cleavages in vivo yield mature proteins. The processing of the polyprotein is temporally regulated. In early stages (1.7 hpi), P1234 is first cleaved in trans through its nsP2 protease activity, releasing P123' and nsP4, which associate to form the early replication complex. At the same time, P1234 is also cut at the nsP1/nsP2 site early in infection but with lower efficiency. After replication of the viral minus-strand RNAs (4 hpi), the polyproteins are cut at the nsP1/nsP2 and nsP2/nsP3 sites very efficiently, preventing accumulation of P123' and P1234 and allowing the formation of the late replication complex. NsP3'/nsP4 site is not cleaved anymore and P34 is produced rather than nsP4. In terms of processing, specific enzymatic cleavages in vivo yield mature proteins. The processing of the polyprotein is temporally regulated. In early stages (1.7 hpi), P123 is cleaved at the nsP1/nsP2 site with low efficiency. After replication of the viral minus-strand RNAs (4 hpi), the polyproteins are cut at the nsP1/nsP2 and nsP2/nsP3 sites very efficiently, preventing accumulation of P123 and allowing the formation of the late replication complex. Post-translationally, specific enzymatic cleavages in vivo yield mature proteins. The processing of the polyprotein is temporally regulated. In early stages (1.7 hpi), P123 is cleaved at the nsP1/nsP2 site with low efficiency. After replication of the viral minus-strand RNAs (4 hpi), the polyproteins are cut at the nsP1/nsP2 and nsP2/nsP3 sites very efficiently, preventing accumulation of P123' and allowing the formation of the late replication complex. Palmitoylated by host palmitoyltransferases ZDHHC2 and ZDHHC19. In terms of processing, phosphorylated by host on serines and threonines. Post-translationally, ubiquitinated; targets the protein for rapid degradation via the ubiquitin system. Nsp4 is present in extremely low quantities due to low frequency of translation through the amber stop-codon and the degradation by the ubiquitin pathway.

It localises to the host cytoplasmic vesicle membrane. The protein localises to the host cell membrane. The protein resides in the host cell projection. It is found in the host filopodium. Its subcellular location is the host nucleus. It localises to the host cytoplasm. It catalyses the reaction GTP + S-adenosyl-L-methionine = N(7)-methyl-GTP + S-adenosyl-L-homocysteine. It carries out the reaction N(7)-methyl-GTP + L-histidyl-[protein] = N(tele)-(N(7)-methylguanosine 5'-phospho)-L-histidyl-[protein] + diphosphate. The enzyme catalyses N(tele)-(N(7)-methylguanosine 5'-phospho)-L-histidyl-[protein] + a 5'-end diphospho-(purine-ribonucleoside) in mRNA + H(+) = a 5'-end (N(7)-methyl 5'-triphosphoguanosine)-(purine-ribonucleoside) in mRNA + L-histidyl-[protein]. The catalysed reaction is a 5'-end triphospho-ribonucleoside in mRNA + H2O = a 5'-end diphospho-ribonucleoside in mRNA + phosphate + H(+). It catalyses the reaction a ribonucleoside 5'-triphosphate + H2O = a ribonucleoside 5'-diphosphate + phosphate + H(+). It carries out the reaction ATP + H2O = ADP + phosphate + H(+). The enzyme catalyses RNA(n) + a ribonucleoside 5'-triphosphate = RNA(n+1) + diphosphate. The catalysed reaction is 4-O-(ADP-D-ribosyl)-L-aspartyl-[protein] + H2O = L-aspartyl-[protein] + ADP-D-ribose + H(+). It catalyses the reaction 5-O-(ADP-D-ribosyl)-L-glutamyl-[protein] + H2O = L-glutamyl-[protein] + ADP-D-ribose + H(+). It carries out the reaction RNA(n) + ATP = RNA(n)-3'-adenine ribonucleotide + diphosphate. The enzyme catalyses ADP-alpha-D-ribose 1''-phosphate + H2O = ADP-D-ribose + phosphate. Inactive precursor of the viral replicase, which is activated by cleavages carried out by the viral protease nsP2. Functionally, the early replication complex formed by the polyprotein P123' and nsP4 synthesizes minus-strand RNAs. Polyprotein P123' is a short-lived polyprotein that accumulates during early stage of infection. As soon P123' is cleaved into mature proteins, the plus-strand RNAs synthesis begins. Its function is as follows. The early replication complex formed by the polyprotein P123 and nsP4 synthesizes minus-strand RNAs. As soon P123 is cleaved into mature proteins, the plus-strand RNAs synthesis begins. In terms of biological role, cytoplasmic capping enzyme that catalyzes two virus-specific reactions: methyltransferase and nsP1 guanylyltransferase. mRNA-capping is necessary since all viral RNAs are synthesized in the cytoplasm, and host capping enzymes are restricted to the nucleus. The enzymatic reaction involves a covalent link between 7-methyl-GMP and nsP1, whereas eukaryotic capping enzymes form a covalent complex only with GMP. nsP1 capping consists in the following reactions: GTP is first methylated into 7-methyl-GMP and then is covalently linked to nsP1 to form the m7GMp-nsP1 complex from which 7-methyl-GMP complex is transferred to the mRNA to create the cap structure. NsP1 is also needed for the initiation of the minus-strand RNAs synthesis. Probably serves as a membrane anchor for the replication complex composed of nsP1-nsP4. Palmitoylated nsP1 is remodeling host cell cytoskeleton, and induces filopodium-like structure formation at the surface of the host cell. Multifunctional protein whose N-terminus is part of the RNA polymerase complex and displays NTPase, RNA triphosphatase and helicase activities. NTPase and RNA triphosphatase are involved in viral RNA capping and helicase keeps a check on the dsRNA replication intermediates. The C-terminus harbors a protease that specifically cleaves the polyproteins and releases the mature proteins. Required for the shutoff of minus-strand RNAs synthesis. Specifically inhibits the host IFN response by promoting the nuclear export of host STAT1. Also inhibits host transcription by inducing the rapid proteasome-dependent degradation of POLR2A, a catalytic subunit of the RNAPII complex. The resulting inhibition of cellular protein synthesis serves to ensure maximal viral gene expression and to evade host immune response. Functionally, seems to be essential for minus-strand RNAs and subgenomic 26S mRNAs synthesis. Displays mono-ADP-ribosylhydrolase activity. ADP-ribosylation is a post-translational modification that controls various processes of the host cell and the virus probably needs to revert it for optimal viral replication. Binds proteins of FXR family and sequesters them into the viral RNA replication complexes thereby inhibiting the formation of host stress granules on viral mRNAs. The nsp3'-FXR complexes bind viral RNAs and probably orchestrate the assembly of viral replication complexes, thanks to the ability of FXR family members to self-assemble and bind DNA. Its function is as follows. Seems to be essential for minus-strand RNAs and subgenomic 26S mRNAs synthesis. Displays mono-ADP-ribosylhydrolase activity. ADP-ribosylation is a post-translational modification that controls various processes of the host cell and the virus probably needs to revert it for optimal viral replication. Binds proteins of G3BP family and sequesters them into the viral RNA replication complexes thereby inhibiting the formation of host stress granules on viral mRNAs. The nsp3-G3BP complexes bind viral RNAs and probably orchestrate the assembly of viral replication complexes, thanks to the ability of G3BP family members to self-assemble and bind DNA. In terms of biological role, RNA dependent RNA polymerase. Replicates genomic and antigenomic RNA by recognizing replications specific signals. The early replication complex formed by the polyprotein P123 and nsP4 synthesizes minus-strand RNAs. The late replication complex composed of fully processed nsP1-nsP4 is responsible for the production of genomic and subgenomic plus-strand RNAs. This Anopheles (Human) protein is Polyprotein P1234.